The primary structure comprises 682 residues: UvrABC system protein B (682 aa).

In terms of domain architecture, Helicase ATP-binding spans 27-414 (DNIRAGVAHQ…SEGIVVEQII (388 aa)). Residue 40–47 (GVTGSGKT) participates in ATP binding. The Beta-hairpin motif lies at 93–116 (YYDYYQPEAYVPTSDTYIEKDSSI). One can recognise a Helicase C-terminal domain in the interval 432 to 594 (QMEDLMTECR…IEPVSVRKSL (163 aa)). The interval 609–628 (AAKGRGKGRGRQAAPAQTAA) is disordered. Residues 642 to 677 (GGLIQRLEREMRESARDLEFEKAAELRDRIRMLRER) form the UVR domain.

The protein belongs to the UvrB family. As to quaternary structure, forms a heterotetramer with UvrA during the search for lesions. Interacts with UvrC in an incision complex.

It is found in the cytoplasm. The UvrABC repair system catalyzes the recognition and processing of DNA lesions. A damage recognition complex composed of 2 UvrA and 2 UvrB subunits scans DNA for abnormalities. Upon binding of the UvrA(2)B(2) complex to a putative damaged site, the DNA wraps around one UvrB monomer. DNA wrap is dependent on ATP binding by UvrB and probably causes local melting of the DNA helix, facilitating insertion of UvrB beta-hairpin between the DNA strands. Then UvrB probes one DNA strand for the presence of a lesion. If a lesion is found the UvrA subunits dissociate and the UvrB-DNA preincision complex is formed. This complex is subsequently bound by UvrC and the second UvrB is released. If no lesion is found, the DNA wraps around the other UvrB subunit that will check the other stand for damage. The sequence is that of UvrABC system protein B from Oleidesulfovibrio alaskensis (strain ATCC BAA-1058 / DSM 17464 / G20) (Desulfovibrio alaskensis).